The primary structure comprises 653 residues: Structural protein ORF653 (653 aa).

Residues 300 to 330 are a coiled coil; sequence AKEETKQETKQETGKEEEEKKETKQESQEQL. The span at 302–326 shows a compositional bias: basic and acidic residues; the sequence is EETKQETKQETGKEEEEKKETKQES. Disordered regions lie at residues 302–329, 344–388, and 626–653; these read EETKQETKQETGKEEEEKKETKQESQEQ, GQPA…ENTP, and AGQQEETDETTEEEEEEEEEGNDTVKLS. A compositionally biased stretch (low complexity) spans 371-381; the sequence is EENNAEAPQQR. Residues 505 to 649 are a coiled coil; sequence KEQELYKELD…EEEEEEGNDT (145 aa). The segment covering 630–647 has biased composition (acidic residues); the sequence is EETDETTEEEEEEEEEGN.

It is found in the virion. The protein is Structural protein ORF653 of Acidianus two-tailed virus (ATV).